A 364-amino-acid polypeptide reads, in one-letter code: UDP-3-O-acylglucosamine N-acyltransferase (364 aa).

His267 acts as the Proton acceptor in catalysis.

It belongs to the transferase hexapeptide repeat family. LpxD subfamily. In terms of assembly, homotrimer.

It catalyses the reaction a UDP-3-O-[(3R)-3-hydroxyacyl]-alpha-D-glucosamine + a (3R)-hydroxyacyl-[ACP] = a UDP-2-N,3-O-bis[(3R)-3-hydroxyacyl]-alpha-D-glucosamine + holo-[ACP] + H(+). It functions in the pathway bacterial outer membrane biogenesis; LPS lipid A biosynthesis. Catalyzes the N-acylation of UDP-3-O-acylglucosamine using 3-hydroxyacyl-ACP as the acyl donor. Is involved in the biosynthesis of lipid A, a phosphorylated glycolipid that anchors the lipopolysaccharide to the outer membrane of the cell. This chain is UDP-3-O-acylglucosamine N-acyltransferase, found in Bordetella petrii (strain ATCC BAA-461 / DSM 12804 / CCUG 43448).